The primary structure comprises 125 residues: Putative RNA polymerase sigma-G factor (125 aa).

The protein belongs to the sigma-70 factor family.

Its function is as follows. Sigma factors are initiation factors that promote the attachment of RNA polymerase to specific initiation sites and are then released. In Bacillus thuringiensis subsp. kurstaki, this protein is Putative RNA polymerase sigma-G factor.